The following is a 229-amino-acid chain: Cell division protein FtsQ (229 aa).

The chain crosses the membrane as a helical span at residues 1–21 (MIVLLCVIFAFLVYSNWHSWL). Residues 22-229 (ESLDRNPIRA…AAVGFSPLPK (208 aa)) are Periplasmic-facing. Residues 27–97 (NPIRAYALTH…DRLSITLIEH (71 aa)) enclose the POTRA domain.

It belongs to the FtsQ/DivIB family. FtsQ subfamily. As to quaternary structure, part of a complex composed of FtsB, FtsL and FtsQ.

The protein resides in the cell inner membrane. Functionally, essential cell division protein. May link together the upstream cell division proteins, which are predominantly cytoplasmic, with the downstream cell division proteins, which are predominantly periplasmic. May control correct divisome assembly. This chain is Cell division protein FtsQ, found in Actinobacillus pleuropneumoniae serotype 3 (strain JL03).